The following is a 138-amino-acid chain: MKYILAIDFGLKKIGTAIANTLDKYPSAFHVFEVKNNFKTAVNNLFLRIKNDGYELEKIVIGFPKFHYYSDIQKAIKSFKQLLEKRFNLPIILVDESNTTSAVKDKLITMDLKHKDFKKAKDTLAAVLILERFFQNYH.

It belongs to the YqgF nuclease family.

It is found in the cytoplasm. Its function is as follows. Could be a nuclease involved in processing of the 5'-end of pre-16S rRNA. The chain is Putative pre-16S rRNA nuclease from Mycoplasma genitalium (strain ATCC 33530 / DSM 19775 / NCTC 10195 / G37) (Mycoplasmoides genitalium).